Here is a 49-residue protein sequence, read N- to C-terminus: SPbeta prophage-derived uncharacterized protein YoqT (49 aa).

A helical membrane pass occupies residues 7-29 (CFVNWSFDKIMDYILIAGLYFVF).

It is found in the cell membrane. This Bacillus subtilis (strain 168) protein is SPbeta prophage-derived uncharacterized protein YoqT (yoqT).